Reading from the N-terminus, the 463-residue chain is Glycine--tRNA ligase (463 aa).

Substrate-binding residues include Arg102 and Glu165. ATP contacts are provided by residues 197-199 (RNE), 207-212 (FRTREF), 284-285 (EL), and 328-331 (GLTR). 212–216 (FEQME) is a binding site for substrate. A substrate-binding site is contributed by 324–328 (EPAAG).

This sequence belongs to the class-II aminoacyl-tRNA synthetase family. In terms of assembly, homodimer.

It localises to the cytoplasm. The catalysed reaction is tRNA(Gly) + glycine + ATP = glycyl-tRNA(Gly) + AMP + diphosphate. Catalyzes the attachment of glycine to tRNA(Gly). This chain is Glycine--tRNA ligase, found in Mycobacterium bovis (strain ATCC BAA-935 / AF2122/97).